The sequence spans 135 residues: Membrane-anchored ubiquitin-fold protein 4 (135 aa).

A disordered region spans residues 1-20 (MAEKEEGKVAAEGGAEAEAD). One can recognise a Ubiquitin-like domain in the interval 23–92 (VEVKFRLFDG…NDKNIAQCRA (70 aa)). Cys132 is subject to Cysteine methyl ester. Cys132 is lipidated: S-geranylgeranyl cysteine. Positions 133–135 (TIL) are cleaved as a propeptide — removed in mature form.

The protein resides in the cell membrane. Its function is as follows. May serve as docking site to facilitate the association of other proteins to the plasma membrane. The polypeptide is Membrane-anchored ubiquitin-fold protein 4 (MUB4) (Oryza sativa subsp. japonica (Rice)).